Reading from the N-terminus, the 179-residue chain is Large ribosomal subunit protein uL5 (179 aa).

This sequence belongs to the universal ribosomal protein uL5 family. In terms of assembly, part of the 50S ribosomal subunit; part of the 5S rRNA/L5/L18/L25 subcomplex. Contacts the 5S rRNA and the P site tRNA. Forms a bridge to the 30S subunit in the 70S ribosome.

In terms of biological role, this is one of the proteins that bind and probably mediate the attachment of the 5S RNA into the large ribosomal subunit, where it forms part of the central protuberance. In the 70S ribosome it contacts protein S13 of the 30S subunit (bridge B1b), connecting the 2 subunits; this bridge is implicated in subunit movement. Contacts the P site tRNA; the 5S rRNA and some of its associated proteins might help stabilize positioning of ribosome-bound tRNAs. In Staphylococcus haemolyticus (strain JCSC1435), this protein is Large ribosomal subunit protein uL5.